Consider the following 367-residue polypeptide: MFIDNVELTVHSGKGGQGAVSFRREKFVPKGGPDGGDGGDGGNVYFLVDKNTHTLSHFKGKKVLKAQNGRPGEGRRKHGKKGEDLILIVPPGTQVYDAQSGELIFDLVEDGQKVLFLQGGKGGKGNWHFKSASNQRPTYAQPGLPGKVVQIRLELKLIADVGLVGFPNVGKSTLISTISNAKPEVANYEFTTLTPKLGVVRVSEFESFVMADIPGIIGGASEGKGLGLQFLKHIERTKSLLYMIDMSSYRDPLTQYKTLQKELKNFSEELAKRSFAIALTKIDALQEDEAKEKIEKFIEDLHLNRGGDNRYGLEERYPYFIQDIYAYDSSKPFFVVSISAVARINIDALKYALYDLVKKERSEANSD.

One can recognise an Obg domain in the interval 1–158 (MFIDNVELTV…VQIRLELKLI (158 aa)). Residues 159 to 358 (ADVGLVGFPN…LKYALYDLVK (200 aa)) enclose the OBG-type G domain. Residues 165-172 (GFPNVGKS), 190-194 (FTTLT), 212-215 (DIPG), 280-283 (TKID), and 339-341 (SAV) each bind GTP. Mg(2+) contacts are provided by serine 172 and threonine 192.

It belongs to the TRAFAC class OBG-HflX-like GTPase superfamily. OBG GTPase family. As to quaternary structure, monomer. Requires Mg(2+) as cofactor.

The protein localises to the cytoplasm. Functionally, an essential GTPase which binds GTP, GDP and possibly (p)ppGpp with moderate affinity, with high nucleotide exchange rates and a fairly low GTP hydrolysis rate. Plays a role in control of the cell cycle, stress response, ribosome biogenesis and in those bacteria that undergo differentiation, in morphogenesis control. The chain is GTPase Obg from Nitratiruptor sp. (strain SB155-2).